A 199-amino-acid polypeptide reads, in one-letter code: Outer-membrane lipoprotein LolB (199 aa).

The N-terminal stretch at M1–G28 is a signal peptide. A lipid anchor (N-palmitoyl cysteine) is attached at C29. C29 carries S-diacylglycerol cysteine lipidation.

Belongs to the LolB family. In terms of assembly, monomer.

The protein localises to the cell outer membrane. Its function is as follows. Plays a critical role in the incorporation of lipoproteins in the outer membrane after they are released by the LolA protein. This chain is Outer-membrane lipoprotein LolB, found in Bordetella bronchiseptica (strain ATCC BAA-588 / NCTC 13252 / RB50) (Alcaligenes bronchisepticus).